Reading from the N-terminus, the 606-residue chain is Probable glutamine--fructose-6-phosphate aminotransferase [isomerizing] (606 aa).

C2 serves as the catalytic For GATase activity. Residues 2–224 enclose the Glutamine amidotransferase type-2 domain; it reads CGISACLNHT…DNDYGYITNN (223 aa). 2 SIS domains span residues 282 to 427 and 458 to 596; these read FFPE…SLDN and LLEF…PDYP.

It carries out the reaction D-fructose 6-phosphate + L-glutamine = D-glucosamine 6-phosphate + L-glutamate. Its pathway is nucleotide-sugar biosynthesis; UDP-N-acetyl-alpha-D-glucosamine biosynthesis; alpha-D-glucosamine 6-phosphate from D-fructose 6-phosphate: step 1/1. Functionally, controls the flux of glucose into the hexosamine pathway. Most likely involved in regulating the availability of precursors for glycosylation of proteins (Potential). The polypeptide is Probable glutamine--fructose-6-phosphate aminotransferase [isomerizing] (Acanthamoeba polyphaga (Amoeba)).